A 782-amino-acid polypeptide reads, in one-letter code: Translation initiation factor IF-2 (782 aa).

Positions 1-14 (MSKNIDDKNEDGKK) are enriched in basic and acidic residues. Disordered stretches follow at residues 1-106 (MSKN…KKTY) and 132-174 (SIVS…AETE). Basic residues predominate over residues 15–25 (IKIIKLRKKVV). Residues 31–43 (NDLSGKNNPSGST) show a composition bias toward polar residues. A compositionally biased stretch (basic and acidic residues) spans 44-61 (DLHKHNNKVEYSHSRDGR). 2 stretches are compositionally biased toward polar residues: residues 86–106 (GYSQ…KKTY) and 133–142 (IVSSASSTDS). Basic and acidic residues predominate over residues 143–159 (ENSKELNRKLGEKKKQQ). Residues 280-453 (EKPPVITIMG…DMMLLKANPS (174 aa)) form the tr-type G domain. The G1 stretch occupies residues 289-296 (GHVDHGKT). A GTP-binding site is contributed by 289–296 (GHVDHGKT). Residues 314 to 318 (GITQH) form a G2 region. Positions 335–338 (DTPG) are G3. GTP contacts are provided by residues 335–339 (DTPGH) and 389–392 (NKID). Residues 389 to 392 (NKID) form a G4 region. Residues 425 to 427 (SAL) form a G5 region.

The protein belongs to the TRAFAC class translation factor GTPase superfamily. Classic translation factor GTPase family. IF-2 subfamily.

It is found in the cytoplasm. Its function is as follows. One of the essential components for the initiation of protein synthesis. Protects formylmethionyl-tRNA from spontaneous hydrolysis and promotes its binding to the 30S ribosomal subunits. Also involved in the hydrolysis of GTP during the formation of the 70S ribosomal complex. In Borreliella afzelii (strain PKo) (Borrelia afzelii), this protein is Translation initiation factor IF-2.